The chain runs to 243 residues: GrpE protein homolog, mitochondrial (243 aa).

Residues 56 to 79 (KKEEPKDENDAAAAEEDANLTEEQ) form a disordered region.

This sequence belongs to the GrpE family. In terms of assembly, component of the PAM complex, at least composed of mtHsp70, MGE1, TIM44, PAM16, PAM17 and PAM18.

The protein localises to the mitochondrion matrix. Its function is as follows. Essential component of the PAM complex, a complex required for the translocation of transit peptide-containing proteins from the inner membrane into the mitochondrial matrix in an ATP-dependent manner. Seems to control the nucleotide-dependent binding of SSC1 to substrate proteins. This Kluyveromyces lactis (strain ATCC 8585 / CBS 2359 / DSM 70799 / NBRC 1267 / NRRL Y-1140 / WM37) (Yeast) protein is GrpE protein homolog, mitochondrial (mge1).